The sequence spans 423 residues: Pentamidine resistance factor, mitochondrial (423 aa).

A helical transmembrane segment spans residues 199-219; it reads PVFFTLVFIFEEVSVLIFTFF.

Interacts with COX18. This interaction may be essential for its insertion into mitochondrial inner membrane.

It localises to the mitochondrion inner membrane. Functionally, probably involved in mitochondrial export. Confers resistance to the anti-pneumocystis carinii drug pentamidine. May act by the removal of pentamidine, or its damage targets, from the matrix by an active-transport mechanism. This is Pentamidine resistance factor, mitochondrial (PNT1) from Saccharomyces cerevisiae (strain ATCC 204508 / S288c) (Baker's yeast).